The sequence spans 400 residues: Bifunctional enzyme IspD/IspF (400 aa).

The tract at residues 1–244 (MSHRVLGTER…LLKERDKMDI (244 aa)) is 2-C-methyl-D-erythritol 4-phosphate cytidylyltransferase. The 2-C-methyl-D-erythritol 2,4-cyclodiphosphate synthase stretch occupies residues 245–400 (RTGNGYDVHR…ALATVTLVRT (156 aa)). A divalent metal cation contacts are provided by Asp251 and His253. 4-CDP-2-C-methyl-D-erythritol 2-phosphate contacts are provided by residues 251–253 (DVH) and 277–278 (HS). Residue His285 participates in a divalent metal cation binding. 4-CDP-2-C-methyl-D-erythritol 2-phosphate-binding positions include 299–301 (DIG), 375–378 (TTSE), Phe382, and Arg385.

The protein in the N-terminal section; belongs to the IspD/TarI cytidylyltransferase family. IspD subfamily. This sequence in the C-terminal section; belongs to the IspF family. It depends on a divalent metal cation as a cofactor.

It catalyses the reaction 2-C-methyl-D-erythritol 4-phosphate + CTP + H(+) = 4-CDP-2-C-methyl-D-erythritol + diphosphate. The catalysed reaction is 4-CDP-2-C-methyl-D-erythritol 2-phosphate = 2-C-methyl-D-erythritol 2,4-cyclic diphosphate + CMP. It functions in the pathway isoprenoid biosynthesis; isopentenyl diphosphate biosynthesis via DXP pathway; isopentenyl diphosphate from 1-deoxy-D-xylulose 5-phosphate: step 2/6. It participates in isoprenoid biosynthesis; isopentenyl diphosphate biosynthesis via DXP pathway; isopentenyl diphosphate from 1-deoxy-D-xylulose 5-phosphate: step 4/6. In terms of biological role, bifunctional enzyme that catalyzes the formation of 4-diphosphocytidyl-2-C-methyl-D-erythritol from CTP and 2-C-methyl-D-erythritol 4-phosphate (MEP) (IspD), and catalyzes the conversion of 4-diphosphocytidyl-2-C-methyl-D-erythritol 2-phosphate (CDP-ME2P) to 2-C-methyl-D-erythritol 2,4-cyclodiphosphate (ME-CPP) with a corresponding release of cytidine 5-monophosphate (CMP) (IspF). The chain is Bifunctional enzyme IspD/IspF from Dinoroseobacter shibae (strain DSM 16493 / NCIMB 14021 / DFL 12).